The chain runs to 569 residues: Synaptotagmin-4 (569 aa).

Residues 1-21 (MGFLFGLFIGIAVSFGLVVAF) form a helical membrane-spanning segment. The SMP-LTD domain maps to 67–251 (QRQKLNWLNL…WPVRKIIPIL (185 aa)). Residues 229–531 (EETIRDAIED…KIGRVIMTLT (303 aa)) form a phospholipid binding region. C2 domains are found at residues 245–366 (RKII…DIWL) and 426–543 (TDMK…QEWF). Positions 459, 465, 514, 516, and 521 each coordinate Ca(2+).

It belongs to the synaptotagmin family. Requires Ca(2+) as cofactor.

Its subcellular location is the membrane. May be involved in membrane trafficking. This chain is Synaptotagmin-4 (SYT4), found in Arabidopsis thaliana (Mouse-ear cress).